The sequence spans 149 residues: Urease accessory protein UreE (149 aa).

The protein belongs to the UreE family.

It localises to the cytoplasm. Functionally, involved in urease metallocenter assembly. Binds nickel. Probably functions as a nickel donor during metallocenter assembly. The protein is Urease accessory protein UreE of Prochlorococcus marinus (strain MIT 9215).